The following is a 78-amino-acid chain: Acyl carrier protein (78 aa).

In terms of domain architecture, Carrier spans 1–76 (MSLEDDVKLI…DVITYIKTRQ (76 aa)). An O-(pantetheine 4'-phosphoryl)serine modification is found at serine 36.

It belongs to the acyl carrier protein (ACP) family. In terms of processing, 4'-phosphopantetheine is transferred from CoA to a specific serine of apo-ACP by AcpS. This modification is essential for activity because fatty acids are bound in thioester linkage to the sulfhydryl of the prosthetic group.

The protein resides in the cytoplasm. It functions in the pathway lipid metabolism; fatty acid biosynthesis. Carrier of the growing fatty acid chain in fatty acid biosynthesis. The sequence is that of Acyl carrier protein from Chlamydia felis (strain Fe/C-56) (Chlamydophila felis).